Consider the following 547-residue polypeptide: Elongator complex protein 3 (547 aa).

A Radical SAM core domain is found at 82 to 372; it reads RTASGIAVVA…YRVQRDIPMP (291 aa). Residues cysteine 99, cysteine 109, and cysteine 112 each contribute to the [4Fe-4S] cluster site. Phosphoserine is present on serine 161. Lysine 164 contributes to the acetyl-CoA binding site. Lysine 229 carries the N6-methyllysine modification. Tyrosine 251 carries the post-translational modification Phosphotyrosine. Residues 396 to 547 enclose the N-acetyltransferase domain; it reads IQCRDVRTRE…QGPYMVKMLK (152 aa). Residues 474–477, 497–499, and tyrosine 530 contribute to the acetyl-CoA site; these read ELHV and FGM.

This sequence belongs to the ELP3 family. In terms of assembly, component of the elongator complex which consists of ELP1, ELP2, ELP3, ELP4, ELP5 and ELP6. ELP1, ELP2 and ELP3 form the elongator core complex. Interacts with alpha-tubulin. It depends on [4Fe-4S] cluster as a cofactor. In terms of processing, tyrosine-phosphorylated. Also serine/threonine-phosphorylated.

Its subcellular location is the cytoplasm. The protein resides in the nucleus. The catalysed reaction is uridine(34) in tRNA + acetyl-CoA + S-adenosyl-L-methionine + H2O = 5-(carboxymethyl)uridine(34) in tRNA + 5'-deoxyadenosine + L-methionine + CoA + 2 H(+). It functions in the pathway tRNA modification; 5-methoxycarbonylmethyl-2-thiouridine-tRNA biosynthesis. Catalytic tRNA acetyltransferase subunit of the elongator complex which is required for multiple tRNA modifications, including mcm5U (5-methoxycarbonylmethyl uridine), mcm5s2U (5-methoxycarbonylmethyl-2-thiouridine), and ncm5U (5-carbamoylmethyl uridine). In the elongator complex, acts as a tRNA uridine(34) acetyltransferase by mediating formation of carboxymethyluridine in the wobble base at position 34 in tRNAs. May also act as a protein lysine acetyltransferase by mediating acetylation of target proteins; such activity is however unclear in vivo and recent evidences suggest that ELP3 primarily acts as a tRNA acetyltransferase. Involved in neurogenesis: regulates the migration and branching of projection neurons in the developing cerebral cortex, through a process depending on alpha-tubulin acetylation. Required for acetylation of GJA1 in the developing cerebral cortex. This Mus musculus (Mouse) protein is Elongator complex protein 3.